Reading from the N-terminus, the 156-residue chain is Small ribosomal subunit protein uS7 (156 aa).

Belongs to the universal ribosomal protein uS7 family. As to quaternary structure, part of the 30S ribosomal subunit. Contacts proteins S9 and S11.

Its function is as follows. One of the primary rRNA binding proteins, it binds directly to 16S rRNA where it nucleates assembly of the head domain of the 30S subunit. Is located at the subunit interface close to the decoding center, probably blocks exit of the E-site tRNA. The chain is Small ribosomal subunit protein uS7 from Rhodospirillum centenum (strain ATCC 51521 / SW).